The chain runs to 354 residues: Neutral protease 2 homolog BCIN_12g06300 (354 aa).

Positions Met-1 to Ser-19 are cleaved as a signal peptide. The propeptide occupies Ala-20 to Leu-179. 2 cysteine pairs are disulfide-bonded: Cys-183/Cys-255 and Cys-262/Cys-280. His-305 contacts Zn(2+). Residue Glu-306 is part of the active site. Zn(2+)-binding residues include His-309 and Asp-320.

It belongs to the peptidase M35 family. Zn(2+) is required as a cofactor.

The protein resides in the secreted. It carries out the reaction Preferential cleavage of bonds with hydrophobic residues in P1'. Also 3-Asn-|-Gln-4 and 8-Gly-|-Ser-9 bonds in insulin B chain.. Functionally, secreted metalloproteinase that allows assimilation of proteinaceous substrates. Shows high activities on basic nuclear substrates such as histone and protamine. The protein is Neutral protease 2 homolog BCIN_12g06300 of Botryotinia fuckeliana (strain B05.10) (Noble rot fungus).